A 190-amino-acid polypeptide reads, in one-letter code: Elongation factor P-like protein (190 aa).

Belongs to the elongation factor P family.

This is Elongation factor P-like protein from Cronobacter sakazakii (strain ATCC BAA-894) (Enterobacter sakazakii).